The sequence spans 344 residues: MTADTSLRPADHPAVKSGKVGVLLVNLGTPDGTDYTSMRRYLREFLTDRRVIEWSPWKWYPILFGVVLNTRPRKVGKAYELIWNKEKNESYLRTYTRNQSELMAEHLKDLATVKVDWAMRYGTPSIASRIEALKQEGCDRIVLFPLYPQYAAATTATVNDKAFQKLLSMRWQPALRTVPDYHDDETYIEALATSVEKHLATLDWKPEMLLASFHGIPMSYFKQGDPYYCQCQKTGRLLRERLGLTKENFMVTFQSRFGPEEWLQPYTDKTVEKLAQDGVKRIAVINPGFVSDCLETLEEIAEQAAHSFHENGGEKFAHIPCLNDGEDGMTVLEKVVRRELQGWI.

Residues histidine 214 and glutamate 295 each contribute to the Fe cation site.

This sequence belongs to the ferrochelatase family.

Its subcellular location is the cytoplasm. The enzyme catalyses heme b + 2 H(+) = protoporphyrin IX + Fe(2+). Its pathway is porphyrin-containing compound metabolism; protoheme biosynthesis; protoheme from protoporphyrin-IX: step 1/1. Its function is as follows. Catalyzes the ferrous insertion into protoporphyrin IX. In Rhizobium leguminosarum bv. trifolii (strain WSM2304), this protein is Ferrochelatase.